The chain runs to 368 residues: Phospho-N-acetylmuramoyl-pentapeptide-transferase (368 aa).

Helical transmembrane passes span Gly34–Leu54, Thr79–Ala99, Leu102–Tyr122, Ala140–Gly160, Leu176–Gly196, Gly207–Ala227, Leu247–Pro267, Ile271–Ala291, Ile296–Val316, and Gln345–Leu365.

This sequence belongs to the glycosyltransferase 4 family. MraY subfamily. Mg(2+) is required as a cofactor.

It localises to the cell inner membrane. The enzyme catalyses UDP-N-acetyl-alpha-D-muramoyl-L-alanyl-gamma-D-glutamyl-meso-2,6-diaminopimeloyl-D-alanyl-D-alanine + di-trans,octa-cis-undecaprenyl phosphate = di-trans,octa-cis-undecaprenyl diphospho-N-acetyl-alpha-D-muramoyl-L-alanyl-D-glutamyl-meso-2,6-diaminopimeloyl-D-alanyl-D-alanine + UMP. It participates in cell wall biogenesis; peptidoglycan biosynthesis. Catalyzes the initial step of the lipid cycle reactions in the biosynthesis of the cell wall peptidoglycan: transfers peptidoglycan precursor phospho-MurNAc-pentapeptide from UDP-MurNAc-pentapeptide onto the lipid carrier undecaprenyl phosphate, yielding undecaprenyl-pyrophosphoryl-MurNAc-pentapeptide, known as lipid I. The sequence is that of Phospho-N-acetylmuramoyl-pentapeptide-transferase from Bradyrhizobium sp. (strain BTAi1 / ATCC BAA-1182).